Reading from the N-terminus, the 511-residue chain is Cytochrome P450 89A9 (511 aa).

A helical; Signal-anchor for type II membrane protein membrane pass occupies residues 6–26 (IIFLIISSLTFSIFLKLIFFF). Heme is bound at residue cysteine 454.

Belongs to the cytochrome P450 family. Requires heme as cofactor.

The protein resides in the endoplasmic reticulum membrane. The enzyme catalyses primary fluorescent chlorophyll catabolite + reduced [NADPH--hemoprotein reductase] + O2 = primary fluorescent dioxobilin-type chlorophyll catabolite + formate + oxidized [NADPH--hemoprotein reductase] + 2 H(+). Its pathway is porphyrin-containing compound metabolism; chlorophyll degradation. Its function is as follows. Involved in the chlorophyll breakdown by its action in nonpolar primary fluorescent chlorophyll catabolite (pFCC) decarbonylation. Involved in the formation of major chlorophyll breakdown products, including non-fluorescent dioxobilin-type chlorophyll catabolites (NDCCs), during leaf senescence. This chain is Cytochrome P450 89A9, found in Arabidopsis thaliana (Mouse-ear cress).